A 1499-amino-acid polypeptide reads, in one-letter code: Rap guanine nucleotide exchange factor 2 (1499 aa).

Disordered stretches follow at residues 40 to 59 (HVSS…SSSL) and 68 to 101 (SEAG…SDPL). Over residues 83–94 (VDSEDDDDEEDI) the composition is skewed to acidic residues. Position 135–254 (135–254 (AFANMTMSVR…VEEEGEIVMV (120 aa))) interacts with a nucleoside 3',5'-cyclic phosphate. Residues 267 to 380 (KGHIVIKGTS…RLLNIACAAK (114 aa)) enclose the N-terminal Ras-GEF domain. The PDZ domain maps to 385–470 (LMTLTKPSRE…ITVKTNLFVF (86 aa)). Serine 501 bears the Phosphoserine mark. A Ras-associating domain is found at 606 to 692 (PDQVLRVFKA…GRYYLKNNME (87 aa)). At threonine 644 the chain carries Phosphothreonine; by PLK2. Positions 717 to 944 (STVEVATQLS…SQGSTNATVL (228 aa)) constitute a Ras-GEF domain. A Phosphoserine; by PLK2 modification is found at serine 806. A Phosphoserine modification is found at serine 930. Position 933 is a phosphoserine; by PLK2 (serine 933). The disordered stretch occupies residues 1002-1050 (PATNTLPKNPGDKKPVKSETSPVAPRAGSQQKAQSLPQPQQQPPPAHKI). The residue at position 1022 (serine 1022) is a Phosphoserine. A compositionally biased stretch (low complexity) spans 1031–1040 (QQKAQSLPQP). Serine 1080, serine 1089, serine 1095, serine 1116, serine 1120, and serine 1159 each carry phosphoserine. The interval 1095–1160 (SLERHKKQAE…RSSIVSNSSF (66 aa)) is disordered. 2 stretches are compositionally biased toward low complexity: residues 1111–1125 (SSQL…QSSP) and 1141–1160 (SDSG…NSSF). Serine 1176 carries the post-translational modification Phosphoserine; by PLK2. 2 disordered regions span residues 1224–1256 (PSTE…SSGS) and 1305–1499 (TKYN…VSAV). Composition is skewed to polar residues over residues 1247–1256 (GSWTSCSSGS) and 1307–1331 (YNRQ…SSTG). The span at 1355–1366 (EAESSSLTSVTT) shows a compositional bias: low complexity. Over residues 1441–1462 (SSDTAGPSSVQQPHGHPTSSRP) the composition is skewed to polar residues. The segment covering 1488-1499 (TEEDEDEQVSAV) has biased composition (acidic residues).

It belongs to the RAPGEF2 family. Interacts with CDH1, CTNNB1 and TJP1. Interacts (via C-terminal domain) with MAGI2 (via PDZ and WW domains); the interaction occurs before or after NGF stimulation. Interacts with KIDINS220 and NTRK1; the interactions occur after NGF stimulation. Found in a complex, at least composed of KIDINS220, MAGI2, NTRK1 and RAPGEF2; the complex is mainly formed at late endosomes in a neuronal growth factor (NGF)-dependent manner. Interacts (via C-terminal domain) with NEDD4 (via WW domains); this interaction leads to ubiquitination and degradation via the proteasome pathway in a cAMP-independent manner. Interacts with MAGI1 isoform 3 (via PDZ domain). Interacts with ADRB1 (via C-terminal PDZ motif); the interaction is direct. Interacts (via Ras-associating domain) with RAP1A (via GTP-bound active form). Interacts weakly with HRAS (via GDP- and GTP-bound forms). Interacts (via C-terminal domain) with MAGI2 (via PDZ and WW domains). Ubiquitinated by NEDD4, leading to proteasomal degradation. In terms of processing, phosphorylation by PLK2 promotes its activity. As to expression, expressed in primary neuronal and endocrine cells (at protein level). Highest expression levels in brain. Lower expression levels in heart, kidney, lung, placenta and blood leukocytes.

The protein localises to the cytoplasm. It localises to the perinuclear region. The protein resides in the cell membrane. It is found in the late endosome. Its subcellular location is the cell junction. Its function is as follows. Functions as a guanine nucleotide exchange factor (GEF), which activates Rap and Ras family of small GTPases by exchanging bound GDP for free GTP in a cAMP-dependent manner. Serves as a link between cell surface receptors and Rap/Ras GTPases in intracellular signaling cascades. Also acts as an effector for Rap1 by direct association with Rap1-GTP thereby leading to the amplification of Rap1-mediated signaling. Shows weak activity on HRAS. It is controversial whether RAPGEF2 binds cAMP and cGMP or not. Its binding to ligand-activated beta-1 adrenergic receptor ADRB1 leads to the Ras activation through the G(s)-alpha signaling pathway. Involved in the cAMP-induced Ras and Erk1/2 signaling pathway that leads to sustained inhibition of long term melanogenesis by reducing dendrite extension and melanin synthesis. Also provides inhibitory signals for cell proliferation of melanoma cells and promotes their apoptosis in a cAMP-independent nanner. Regulates cAMP-induced neuritogenesis by mediating the Rap1/B-Raf/ERK signaling through a pathway that is independent on both PKA and RAPGEF3/RAPGEF4. Involved in neuron migration and in the formation of the major forebrain fiber connections forming the corpus callosum, the anterior commissure and the hippocampal commissure during brain development. Involved in neuronal growth factor (NGF)-induced sustained activation of Rap1 at late endosomes and in brain-derived neurotrophic factor (BDNF)-induced axon outgrowth of hippocampal neurons. Plays a role in the regulation of embryonic blood vessel formation and in the establishment of basal junction integrity and endothelial barrier function. May be involved in the regulation of the vascular endothelial growth factor receptor KDR and cadherin CDH5 expression at allantois endothelial cell-cell junctions. The chain is Rap guanine nucleotide exchange factor 2 (RAPGEF2) from Homo sapiens (Human).